Here is a 223-residue protein sequence, read N- to C-terminus: Adenylate kinase (223 aa).

Position 17 to 22 (17 to 22 (GAGKGT)) interacts with ATP. The interval 37–66 (STGDMLRSQVAKGTPLGVEAKKIMDQGGLV) is NMP. Residues T38, R43, 64–66 (GLV), 93–96 (GFPR), and Q100 contribute to the AMP site. Residues 134–171 (GRLVHPSSGRSYHKLFNPPKVEMTDDVTGEPLVQRSDD) are LID. Residues R135 and 144 to 145 (SY) each bind ATP. The AMP site is built by R168 and R179. Position 207 (Q207) interacts with ATP.

Belongs to the adenylate kinase family. AK2 subfamily. In terms of assembly, monomer.

Its subcellular location is the cytoplasm. The protein resides in the cytosol. It is found in the mitochondrion intermembrane space. It catalyses the reaction AMP + ATP = 2 ADP. In terms of biological role, catalyzes the reversible transfer of the terminal phosphate group between ATP and AMP. Plays an important role in cellular energy homeostasis and in adenine nucleotide metabolism. Adenylate kinase activity is critical for regulation of the phosphate utilization and the AMP de novo biosynthesis pathways. The protein is Adenylate kinase of Vanderwaltozyma polyspora (strain ATCC 22028 / DSM 70294 / BCRC 21397 / CBS 2163 / NBRC 10782 / NRRL Y-8283 / UCD 57-17) (Kluyveromyces polysporus).